Reading from the N-terminus, the 469-residue chain is 23S rRNA (uracil(1939)-C(5))-methyltransferase RlmD (469 aa).

The TRAM domain occupies 11 to 69 (PKTSNQRLTVTVDKLDMNGVGVARWQNKPIFIAGVLPDEIVDVKVIEQKSKYARAKLIS). Cysteine 82, cysteine 88, cysteine 91, and cysteine 178 together coordinate [4Fe-4S] cluster. Residues glutamine 300, phenylalanine 329, asparagine 334, glutamate 350, aspartate 377, and aspartate 399 each coordinate S-adenosyl-L-methionine. The active-site Nucleophile is cysteine 425.

It belongs to the class I-like SAM-binding methyltransferase superfamily. RNA M5U methyltransferase family. RlmD subfamily.

It carries out the reaction uridine(1939) in 23S rRNA + S-adenosyl-L-methionine = 5-methyluridine(1939) in 23S rRNA + S-adenosyl-L-homocysteine + H(+). Its function is as follows. Catalyzes the formation of 5-methyl-uridine at position 1939 (m5U1939) in 23S rRNA. The protein is 23S rRNA (uracil(1939)-C(5))-methyltransferase RlmD of Colwellia psychrerythraea (strain 34H / ATCC BAA-681) (Vibrio psychroerythus).